Consider the following 303-residue polypeptide: 1D-myo-inositol 2-acetamido-2-deoxy-alpha-D-glucopyranoside deacetylase 1 (303 aa).

Zn(2+) contacts are provided by His15, Asp18, and His157.

This sequence belongs to the MshB deacetylase family. Zn(2+) is required as a cofactor.

It catalyses the reaction 1D-myo-inositol 2-acetamido-2-deoxy-alpha-D-glucopyranoside + H2O = 1D-myo-inositol 2-amino-2-deoxy-alpha-D-glucopyranoside + acetate. Catalyzes the deacetylation of 1D-myo-inositol 2-acetamido-2-deoxy-alpha-D-glucopyranoside (GlcNAc-Ins) in the mycothiol biosynthesis pathway. The chain is 1D-myo-inositol 2-acetamido-2-deoxy-alpha-D-glucopyranoside deacetylase 1 from Saccharopolyspora erythraea (strain ATCC 11635 / DSM 40517 / JCM 4748 / NBRC 13426 / NCIMB 8594 / NRRL 2338).